A 148-amino-acid chain; its full sequence is UPF0178 protein SUN_1096 (148 aa).

The protein belongs to the UPF0178 family.

The polypeptide is UPF0178 protein SUN_1096 (Sulfurovum sp. (strain NBC37-1)).